A 483-amino-acid polypeptide reads, in one-letter code: Glutamate--tRNA ligase 1 (483 aa).

The 'HIGH' region motif lies at 9 to 19 (PSPTGFLHIGG). Positions 238-242 (KLSKR) match the 'KMSKS' region motif. Residue Lys-241 participates in ATP binding.

The protein belongs to the class-I aminoacyl-tRNA synthetase family. Glutamate--tRNA ligase type 1 subfamily. Monomer.

The protein localises to the cytoplasm. It carries out the reaction tRNA(Glu) + L-glutamate + ATP = L-glutamyl-tRNA(Glu) + AMP + diphosphate. Functionally, catalyzes the attachment of glutamate to tRNA(Glu) in a two-step reaction: glutamate is first activated by ATP to form Glu-AMP and then transferred to the acceptor end of tRNA(Glu). The protein is Glutamate--tRNA ligase 1 of Bartonella henselae (strain ATCC 49882 / DSM 28221 / CCUG 30454 / Houston 1) (Rochalimaea henselae).